The following is a 716-amino-acid chain: Segment polarity protein dishevelled homolog DVL-3 (716 aa).

Residues 1–82 (MGETKIIYHL…RVVSWLVSAE (82 aa)) enclose the DIX domain. Omega-N-methylarginine is present on Arg27. 2 positions are modified to phosphoserine: Ser48 and Ser125. The segment at 85-235 (HPEPAPFCAD…VSRIERSSSF (151 aa)) is disordered. Basic and acidic residues predominate over residues 142 to 156 (QRERPRRRDGPEHAA). Low complexity predominate over residues 175–190 (SSSTLMSSELETTSFF). The residue at position 192 (Ser192) is a Phosphoserine. Positions 199 to 212 (SRFSSSTEQSSASR) are enriched in low complexity. The residue at position 212 (Arg212) is an Omega-N-methylarginine. Residues 213–226 (LMRRHKRRRRKQKV) show a composition bias toward basic residues. The PDZ domain maps to 249–321 (TVTLNMEKYN…NDDAVRVLRE (73 aa)). Arg271 bears the Asymmetric dimethylarginine; by PRMT1; alternate mark. Symmetric dimethylarginine; by PRMT7; alternate is present on residues Arg271 and Arg342. Arg342 bears the Omega-N-methylarginine; alternate mark. Thr346 is subject to Phosphothreonine. Positions 422–496 (PESGLEVRDR…SEQCYYIFGD (75 aa)) constitute a DEP domain. A disordered region spans residues 546–691 (PYNPHPGFPE…PPGRDLASVP (146 aa)). Positions 565-581 (ASSQHSEGSRSSGSNRS) are enriched in low complexity. Basic and acidic residues-rich tracts occupy residues 582–595 (GSDRRKEKDPKAGD) and 604–622 (ESDHTTRSSLRGPRERAPS). Residue Arg614 is modified to Symmetric dimethylarginine; by PRMT7. Composition is skewed to pro residues over residues 653–663 (YGPPGVPPLYG) and 670–682 (TPPPAAMGPPGAP). Ser697 is modified (phosphoserine). Arg698 is subject to Omega-N-methylarginine; alternate. The residue at position 698 (Arg698) is a Dimethylated arginine; alternate. Ser700 carries the phosphoserine modification.

The protein belongs to the DSH family. Interacts (via the PDZ domain) with the C-terminal regions of VANGL1 and VANGL2. Interacts (via the region containing both the PDZ and DEP domains) with LRRFIP2; the DIX domain may inhibit this interaction. Interacts with CYLD. Interacts with CEP164 and DAB2. Interacts with DCDC2. Interacts with FOXK1 and FOXK2. Interacts with DAAM2. Ubiquitinated. Deubiquitinated by CYLD, which acts on 'Lys-63'-linked ubiquitin chains. Post-translationally, phosphorylated by CSNK1D. In terms of processing, arginine methylation may function as a switch in regulation of function in Wnt signaling. As to expression, ubiquitous.

Its subcellular location is the cytoplasm. In terms of biological role, involved in the signal transduction pathway mediated by multiple Wnt genes. In Mus musculus (Mouse), this protein is Segment polarity protein dishevelled homolog DVL-3 (Dvl3).